The following is a 241-amino-acid chain: Large ribosomal subunit protein uL3 (241 aa).

The disordered stretch occupies residues 140–168 (SHRSIGSTGGRQDPGKTFKNKKMPGHMGD). Position 151 is an N5-methylglutamine (Gln151).

Belongs to the universal ribosomal protein uL3 family. Part of the 50S ribosomal subunit. Forms a cluster with proteins L14 and L19. Post-translationally, methylated by PrmB.

In terms of biological role, one of the primary rRNA binding proteins, it binds directly near the 3'-end of the 23S rRNA, where it nucleates assembly of the 50S subunit. This chain is Large ribosomal subunit protein uL3, found in Azorhizobium caulinodans (strain ATCC 43989 / DSM 5975 / JCM 20966 / LMG 6465 / NBRC 14845 / NCIMB 13405 / ORS 571).